The primary structure comprises 1374 residues: MAAPARDPPGYRYAAAILPTGSILSTIEVASHRRLFDFFAAVRSDENSLYDVEFDALLGSYCNTLSLVRFLELGLSVACVCTKFPELAYMNEGRVQFEVHQPLIARDGPHPVEQPVHNYMTKVIDRRALNAAFSLATEAIALLTGEALDGTGISLHRQLRAIQQLARNVQAVLGAFERGTADQMLHVLLEKAPPLALLLPMQRYLDNGRLATRVARATLVAELKRSFCDTSFFLGKAGHRREAIEAWLVDLTTATQPSVAVPRLTHADTRGRPVDGVLVTTAAIKQRLLQSFLKVEDTEADVPVTYGEMVLNGANLVTALVMGKAVRSLDDVGRHLLDMQEEQLEANRETLDELESAPQTTRVRADLVAIGDRLVFLEALERRIYAATNVPYPLVGAMDLTFVLPLGLFNPAMERFAAHAGDLVPAPGHPEPRAFPPRQLFFWGKDHQVLRLSMENAVGTVCHPSLMNIDAAVGGVNHDPVEAANPYGAYVAAPAGPGADMQQRFLNAWRQRLAHGRVRWVAECQMTAEQFMQPDNANLALELHPAFDFFAGVADVELPGGEVPPAGPGAIQATWRVVNGNLPLALCPVAFRDARGLELGVGRHAMAPATIAAVRGAFEDRSYPAVFYLLQAAIHGNEHVFCALARLVTQCITSYWNNTRCAAFVNDYSLVSYIVTYLGGDLPEECMAVYRDLVAHVEALAQLVDDFTLPGPELGGQAQAELNHLMRDPALLPPLVWDCDGLMRHAALDRHRDCRIDAGGHEPVYAAACNVATADFNRNDGRLLHNTQARAADAADDRPHRPADWTVHHKIYYYVLVPAFSRGRCCTAGVRFDRVYATLQNMVVPEIAPGEECPSDPVTDPAHPLHPANLVANTVKRMFHNGRVVVDGPAMLTLQVLAHNMAERTTALLCSAAPDAGANTASTANMRIFDGALHAGVLLMAPQHLDHTIQNGEYFYVLPVHALFAGADHVANAPNFPPALRDLARDVPLVPPALGANYFSSIRQPVVQHARESAAGENALTYALMAGYFKMSPVALYHQLKTGLHPGFGFTVVRQDRFVTENVLFSERASEAYFLGQLQVARHETGGGVNFTLTQPRGNVDLGVGYTAVAATGTVRNPVTDMGNLPQNFYLGRGAPPLLDNAAAVYLRNAVVAGNRLGPAQPLPVFGCAQVPRRAGMDHGQDAVCEFIATPVATDINYFRRPCNPRGRAAGGVYAGDKEGDVIALMYDHGQSDPARPFAATANPWASQRFSYGDLLYNGAYHLNGASPVLSPCFKFFTAADITAKHRCLERLIVETGSAVSTATAASDVQFKRPPGCRELVEDPCGLFQEAYPITCASDPALLRSARDGEAHARETHFTQYLIYDASPLKGLSL.

The protein belongs to the herpesviridae major capsid protein family. As to quaternary structure, homomultimer. Makes the hexons and eleven out of twelve pentons. Interacts with triplex proteins 1/TRX1 and 2/TRX2; adjacent capsomers are linked together in groups of three by triplexes, heterotrimeric complexes composed of one molecule of TRX1 and two molecules of TRX2. Interacts with scaffold protein; this interaction allows efficient MCP transport to the host nucleus. Interacts with capsid vertex component 2/CVC2. Interacts with the small capsomere-interacting protein/SCP.

The protein localises to the virion. It localises to the host nucleus. Functionally, self-assembles to form an icosahedral capsid with a T=16 symmetry, about 200 nm in diameter, and consisting of 150 hexons and 12 pentons (total of 162 capsomers). Hexons form the edges and faces of the capsid and are each composed of six MCP molecules. In contrast, one penton is found at each of the 12 vertices. Eleven of the pentons are MCP pentamers, while the last vertex is occupied by the portal complex. The capsid is surrounded by a layer of proteinaceous material designated the tegument which, in turn, is enclosed in an envelope of host cell-derived lipids containing virus-encoded glycoproteins. The chain is Major capsid protein from Homo sapiens (Human).